The following is a 216-amino-acid chain: Pyrophosphatase PpaX (216 aa).

The Nucleophile role is filled by aspartate 9.

The protein belongs to the HAD-like hydrolase superfamily. PpaX family. It depends on Mg(2+) as a cofactor.

It catalyses the reaction diphosphate + H2O = 2 phosphate + H(+). In terms of biological role, hydrolyzes pyrophosphate formed during P-Ser-HPr dephosphorylation by HPrK/P. Might play a role in controlling the intracellular pyrophosphate pool. The polypeptide is Pyrophosphatase PpaX (Bacillus cereus (strain AH820)).